The chain runs to 1375 residues: DNA-directed RNA polymerase subunit beta (1375 aa).

Belongs to the RNA polymerase beta chain family. In terms of assembly, the RNAP catalytic core consists of 2 alpha, 1 beta, 1 beta' and 1 omega subunit. When a sigma factor is associated with the core the holoenzyme is formed, which can initiate transcription.

The enzyme catalyses RNA(n) + a ribonucleoside 5'-triphosphate = RNA(n+1) + diphosphate. DNA-dependent RNA polymerase catalyzes the transcription of DNA into RNA using the four ribonucleoside triphosphates as substrates. This Malacoplasma penetrans (strain HF-2) (Mycoplasma penetrans) protein is DNA-directed RNA polymerase subunit beta.